The sequence spans 796 residues: Leucine--tRNA ligase (796 aa).

The 'HIGH' region signature appears at 40-51 (PYPSASGLHVGH). Residues 569–573 (KMSKS) carry the 'KMSKS' region motif. K572 contacts ATP.

This sequence belongs to the class-I aminoacyl-tRNA synthetase family.

It localises to the cytoplasm. It catalyses the reaction tRNA(Leu) + L-leucine + ATP = L-leucyl-tRNA(Leu) + AMP + diphosphate. The chain is Leucine--tRNA ligase from Bdellovibrio bacteriovorus (strain ATCC 15356 / DSM 50701 / NCIMB 9529 / HD100).